The primary structure comprises 500 residues: MINVSFLGLMSGISVLLKTTVIVVGIFEGSNHLEDNGALEGYNDKIMEIVNGYQSFDGKFAEVLPIIGLEKDFPVVVVIGLGKSEDFDENKALKVGGVIYSELNRMKVPDASIVINTDSNVSANIGYGALLRSFKFDKYFVEKKDKNSVYLNKLVLFSKNDPQEVTALFNDLKAEGESIFLARSFVSEPPNILYPETYAQMIYEELSKVGVTVEVFDEDYMKANQMMALLGVGQGSAKKSRLVVMKWNGGDESESPIAFVGKGVTFDTGGISLKPSKGMWDMKYDMAGSASVVGIMRTLAARKAKVNAVGVVGLVENSVDGNAQRPSDVVISMSGQTIEVLNTDAEGRLVLADALWYTQEMFTPKLMVDLATLTGAVVVALGNNQYAGLFSNDDAIANQLIVAGNESGEKLWRLPLDEAYDKLIDSSIADMQNISTKGYGADSITAAQFLQRFVNGVPWVHLDIAGMAWDYEGTEICPKGATGFGVRLLNRFVSKYYESH.

Mn(2+)-binding residues include Lys-262 and Asp-267. Residue Lys-274 is part of the active site. Positions 285, 344, and 346 each coordinate Mn(2+). Arg-348 is an active-site residue.

The protein belongs to the peptidase M17 family. Mn(2+) serves as cofactor.

Its subcellular location is the cytoplasm. The catalysed reaction is Release of an N-terminal amino acid, Xaa-|-Yaa-, in which Xaa is preferably Leu, but may be other amino acids including Pro although not Arg or Lys, and Yaa may be Pro. Amino acid amides and methyl esters are also readily hydrolyzed, but rates on arylamides are exceedingly low.. The enzyme catalyses Release of an N-terminal amino acid, preferentially leucine, but not glutamic or aspartic acids.. Functionally, presumably involved in the processing and regular turnover of intracellular proteins. Catalyzes the removal of unsubstituted N-terminal amino acids from various peptides. The polypeptide is Probable cytosol aminopeptidase (Ehrlichia ruminantium (strain Gardel)).